Consider the following 62-residue polypeptide: Large ribosomal subunit protein uL30 (62 aa).

It belongs to the universal ribosomal protein uL30 family. As to quaternary structure, part of the 50S ribosomal subunit.

This is Large ribosomal subunit protein uL30 from Gluconobacter oxydans (strain 621H) (Gluconobacter suboxydans).